The primary structure comprises 304 residues: Undecaprenyl-diphosphatase (304 aa).

The next 8 helical transmembrane spans lie at 5-25, 47-67, 72-92, 111-131, 137-157, 209-231, 248-268, and 283-303; these read FLFI…EFVP, GFPE…VVVL, ISSS…LKTS, FGIN…LFHD, LFST…LIVI, ISGL…AMVG, TNWI…LVVI, and FAIY…TKVI.

It belongs to the UppP family.

It is found in the cell membrane. It carries out the reaction di-trans,octa-cis-undecaprenyl diphosphate + H2O = di-trans,octa-cis-undecaprenyl phosphate + phosphate + H(+). Its function is as follows. Catalyzes the dephosphorylation of undecaprenyl diphosphate (UPP). Confers resistance to bacitracin. The chain is Undecaprenyl-diphosphatase from Clostridium perfringens (strain 13 / Type A).